We begin with the raw amino-acid sequence, 736 residues long: Elongation factor 2 (736 aa).

One can recognise a tr-type G domain in the interval 19 to 262; it reads DQIRNIGIIA…MVIKFVPNPR (244 aa). GTP contacts are provided by residues 28 to 35, 94 to 98, and 148 to 151; these read AHVDHGKT, DTPGH, and NKVD. H602 carries the diphthamide modification.

It belongs to the TRAFAC class translation factor GTPase superfamily. Classic translation factor GTPase family. EF-G/EF-2 subfamily.

The protein resides in the cytoplasm. Functionally, catalyzes the GTP-dependent ribosomal translocation step during translation elongation. During this step, the ribosome changes from the pre-translocational (PRE) to the post-translocational (POST) state as the newly formed A-site-bound peptidyl-tRNA and P-site-bound deacylated tRNA move to the P and E sites, respectively. Catalyzes the coordinated movement of the two tRNA molecules, the mRNA and conformational changes in the ribosome. The protein is Elongation factor 2 (fusA) of Aeropyrum pernix (strain ATCC 700893 / DSM 11879 / JCM 9820 / NBRC 100138 / K1).